The chain runs to 544 residues: CTP synthase (544 aa).

Residues 1 to 265 are amidoligase domain; the sequence is MTKFIFVTGG…DDIICEHLDL (265 aa). Serine 13 is a CTP binding site. Serine 13 contributes to the UTP binding site. ATP is bound by residues 14–19 and aspartate 71; that span reads SLGKGI. Mg(2+)-binding residues include aspartate 71 and glutamate 139. CTP contacts are provided by residues 146 to 148, 186 to 191, and lysine 222; these read DIE and KTKPTQ. Residues 186–191 and lysine 222 each bind UTP; that span reads KTKPTQ. Positions 290 to 542 constitute a Glutamine amidotransferase type-1 domain; that stretch reads NIAMVGKYVD…VEAALAYQAD (253 aa). Residue glycine 351 coordinates L-glutamine. The active-site Nucleophile; for glutamine hydrolysis is cysteine 378. Residues 379–382, glutamate 402, and arginine 469 each bind L-glutamine; that span reads LGMQ. Active-site residues include histidine 515 and glutamate 517.

This sequence belongs to the CTP synthase family. As to quaternary structure, homotetramer.

It carries out the reaction UTP + L-glutamine + ATP + H2O = CTP + L-glutamate + ADP + phosphate + 2 H(+). It catalyses the reaction L-glutamine + H2O = L-glutamate + NH4(+). The enzyme catalyses UTP + NH4(+) + ATP = CTP + ADP + phosphate + 2 H(+). The protein operates within pyrimidine metabolism; CTP biosynthesis via de novo pathway; CTP from UDP: step 2/2. Allosterically activated by GTP, when glutamine is the substrate; GTP has no effect on the reaction when ammonia is the substrate. The allosteric effector GTP functions by stabilizing the protein conformation that binds the tetrahedral intermediate(s) formed during glutamine hydrolysis. Inhibited by the product CTP, via allosteric rather than competitive inhibition. Catalyzes the ATP-dependent amination of UTP to CTP with either L-glutamine or ammonia as the source of nitrogen. Regulates intracellular CTP levels through interactions with the four ribonucleotide triphosphates. In Laribacter hongkongensis (strain HLHK9), this protein is CTP synthase.